Here is a 424-residue protein sequence, read N- to C-terminus: Geranylgeranyl pyrophosphate synthase D (424 aa).

The tract at residues 42 to 73 (PSATWPSVPKVHKRNRSTSLSDQQTAKKAHAN) is disordered. The span at 58–67 (STSLSDQQTA) shows a compositional bias: polar residues. Isopentenyl diphosphate is bound by residues lysine 147, arginine 150, and histidine 179. Residues aspartate 186 and aspartate 190 each contribute to the Mg(2+) site. A dimethylallyl diphosphate-binding site is contributed by arginine 195. Residue arginine 196 participates in isopentenyl diphosphate binding. The dimethylallyl diphosphate site is built by lysine 274, threonine 275, glutamine 311, lysine 328, and lysine 338.

The protein belongs to the FPP/GGPP synthase family. The cofactor is Mg(2+).

It is found in the cytoplasm. It carries out the reaction isopentenyl diphosphate + dimethylallyl diphosphate = (2E)-geranyl diphosphate + diphosphate. The catalysed reaction is isopentenyl diphosphate + (2E)-geranyl diphosphate = (2E,6E)-farnesyl diphosphate + diphosphate. It catalyses the reaction isopentenyl diphosphate + (2E,6E)-farnesyl diphosphate = (2E,6E,10E)-geranylgeranyl diphosphate + diphosphate. Its pathway is isoprenoid biosynthesis; farnesyl diphosphate biosynthesis; farnesyl diphosphate from geranyl diphosphate and isopentenyl diphosphate: step 1/1. It functions in the pathway isoprenoid biosynthesis; geranyl diphosphate biosynthesis; geranyl diphosphate from dimethylallyl diphosphate and isopentenyl diphosphate: step 1/1. It participates in isoprenoid biosynthesis; geranylgeranyl diphosphate biosynthesis; geranylgeranyl diphosphate from farnesyl diphosphate and isopentenyl diphosphate: step 1/1. Functionally, catalyzes the trans-addition of the 3 molecules of isopentenyl diphosphate (IPP) onto dimethylallyl diphosphate (DMAPP) to form geranylgeranyl pyrophosphate (GGDP). The chain is Geranylgeranyl pyrophosphate synthase D (GGS-D) from Phomopsis amygdali (Fusicoccum amygdali).